The sequence spans 314 residues: Porphobilinogen deaminase (314 aa).

Position 241 is an S-(dipyrrolylmethanemethyl)cysteine (C241).

The protein belongs to the HMBS family. Monomer. The cofactor is dipyrromethane.

It catalyses the reaction 4 porphobilinogen + H2O = hydroxymethylbilane + 4 NH4(+). It functions in the pathway porphyrin-containing compound metabolism; protoporphyrin-IX biosynthesis; coproporphyrinogen-III from 5-aminolevulinate: step 2/4. The protein operates within porphyrin-containing compound metabolism; chlorophyll biosynthesis. Tetrapolymerization of the monopyrrole PBG into the hydroxymethylbilane pre-uroporphyrinogen in several discrete steps. The polypeptide is Porphobilinogen deaminase (Chloroherpeton thalassium (strain ATCC 35110 / GB-78)).